A 285-amino-acid chain; its full sequence is Probable endonuclease 4 (285 aa).

Zn(2+)-binding residues include H69, H109, E145, D179, H182, H216, D229, H231, and E261.

The protein belongs to the AP endonuclease 2 family. Zn(2+) serves as cofactor.

The catalysed reaction is Endonucleolytic cleavage to 5'-phosphooligonucleotide end-products.. Functionally, endonuclease IV plays a role in DNA repair. It cleaves phosphodiester bonds at apurinic or apyrimidinic (AP) sites, generating a 3'-hydroxyl group and a 5'-terminal sugar phosphate. The chain is Probable endonuclease 4 from Escherichia coli O127:H6 (strain E2348/69 / EPEC).